A 550-amino-acid chain; its full sequence is MSKNYAPFIKPYMQYNEHGWGPCELDVVDVPYQPFSKSDRLGKITDWTVTQQDKKFTNKYASSFGNNNQYAYFHEEDDESFRLVDSVGSKVIKPYQRGRGFRPSVHNNPRNVRNQRGRKGNAMGNIMGPGLASITQRYGKGRDGRRNQGRKYRNLPARLRESSVVVQSDWVSVKEIDFPRLLKLSLPNMKEGEDIVTCGALDYYDKAYDRVNLKNERTLMKIDRIVHTATTTDDPIIRRLSKTMGNVFATDDILATIMCCTRSNYSWDVVIEKLGTKIFFDKRDNVKFDMLTVNETSQEPPMDEEGSNNSAHSLSMEATFINHNFSQQVLKMGAEENKFKLAEPNPFEEAGVELASMGYRYKQWDLGNDITLVARCKHNGVTQLPNGDMQFLSIRALNEWDSKAANSIEWRQKLDSQRGAVLSTELRNNACKLAKWTVESVLAGSDQLKLGYVSRVSPRDHLRHVILGTQQFKPQEFATQINLNMDNCWGILRCLIDIIRMQPDGKYLIMKDPNKPMVRIYHIPENAFDSDVSEEEESSEDKPFGLSMNN.

Residues 97–126 (RGRGFRPSVHNNPRNVRNQRGRKGNAMGNI) form a disordered region. The RNA gate stretch occupies residues 287-301 (KFDMLTVNETSQEPP). The disordered stretch occupies residues 530-550 (SDVSEEEESSEDKPFGLSMNN).

This sequence belongs to the eIF-3 subunit D family. As to quaternary structure, component of the eukaryotic translation initiation factor 3 (eIF-3) complex. The eIF-3 complex interacts with pix.

Its subcellular location is the cytoplasm. Its function is as follows. mRNA cap-binding component of the eukaryotic translation initiation factor 3 (eIF-3) complex, which is involved in protein synthesis of a specialized repertoire of mRNAs and, together with other initiation factors, stimulates binding of mRNA and methionyl-tRNAi to the 40S ribosome. The eIF-3 complex specifically targets and initiates translation of a subset of mRNAs involved in cell proliferation. In the eIF-3 complex, eif3d specifically recognizes and binds the 7-methylguanosine cap of a subset of mRNAs. This Drosophila willistoni (Fruit fly) protein is Eukaryotic translation initiation factor 3 subunit D-2.